Consider the following 547-residue polypeptide: CTP synthase (547 aa).

The tract at residues 1 to 269 is amidoligase domain; that stretch reads MKTKFIFVTG…DQKVAIMLRL (269 aa). Ser14 contacts CTP. Ser14 is a binding site for UTP. ATP contacts are provided by residues 15 to 20 and Asp72; that span reads SLGKGL. 2 residues coordinate Mg(2+): Asp72 and Glu143. CTP is bound by residues 150-152, 190-195, and Lys226; these read DIE and KTKPTQ. UTP contacts are provided by residues 190 to 195 and Lys226; that span reads KTKPTQ. A Glutamine amidotransferase type-1 domain is found at 294 to 547; that stretch reads TVAIVGKYVD…IGAAKKHAKV (254 aa). Residue Gly356 participates in L-glutamine binding. Cys383 (nucleophile; for glutamine hydrolysis) is an active-site residue. L-glutamine contacts are provided by residues 384 to 387, Glu407, and Arg475; that span reads LGMQ. Catalysis depends on residues His520 and Glu522.

The protein belongs to the CTP synthase family. Homotetramer.

It catalyses the reaction UTP + L-glutamine + ATP + H2O = CTP + L-glutamate + ADP + phosphate + 2 H(+). The catalysed reaction is L-glutamine + H2O = L-glutamate + NH4(+). The enzyme catalyses UTP + NH4(+) + ATP = CTP + ADP + phosphate + 2 H(+). It functions in the pathway pyrimidine metabolism; CTP biosynthesis via de novo pathway; CTP from UDP: step 2/2. Its activity is regulated as follows. Allosterically activated by GTP, when glutamine is the substrate; GTP has no effect on the reaction when ammonia is the substrate. The allosteric effector GTP functions by stabilizing the protein conformation that binds the tetrahedral intermediate(s) formed during glutamine hydrolysis. Inhibited by the product CTP, via allosteric rather than competitive inhibition. Its function is as follows. Catalyzes the ATP-dependent amination of UTP to CTP with either L-glutamine or ammonia as the source of nitrogen. Regulates intracellular CTP levels through interactions with the four ribonucleotide triphosphates. This chain is CTP synthase, found in Desulfovibrio desulfuricans (strain ATCC 27774 / DSM 6949 / MB).